The sequence spans 198 residues: Glycerol-3-phosphate acyltransferase (198 aa).

The next 6 membrane-spanning stretches (helical) occupy residues tyrosine 5–isoleucine 25, valine 55–phenylalanine 75, glycine 79–leucine 99, valine 114–valine 134, tyrosine 139–isoleucine 159, and tyrosine 164–isoleucine 184.

It belongs to the PlsY family. In terms of assembly, probably interacts with PlsX.

The protein localises to the cell membrane. It carries out the reaction an acyl phosphate + sn-glycerol 3-phosphate = a 1-acyl-sn-glycero-3-phosphate + phosphate. It participates in lipid metabolism; phospholipid metabolism. In terms of biological role, catalyzes the transfer of an acyl group from acyl-phosphate (acyl-PO(4)) to glycerol-3-phosphate (G3P) to form lysophosphatidic acid (LPA). This enzyme utilizes acyl-phosphate as fatty acyl donor, but not acyl-CoA or acyl-ACP. In Finegoldia magna (strain ATCC 29328 / DSM 20472 / WAL 2508) (Peptostreptococcus magnus), this protein is Glycerol-3-phosphate acyltransferase.